Here is a 202-residue protein sequence, read N- to C-terminus: Putative 3-methyladenine DNA glycosylase (202 aa).

This sequence belongs to the DNA glycosylase MPG family.

This chain is Putative 3-methyladenine DNA glycosylase, found in Staphylococcus aureus (strain bovine RF122 / ET3-1).